We begin with the raw amino-acid sequence, 550 residues long: Hydroxylamine reductase (550 aa).

Residues Cys-4, Cys-7, Cys-19, and Cys-26 each contribute to the [2Fe-2S] cluster site. Positions 249, 273, 317, 405, 433, 458, 492, and 494 each coordinate hybrid [4Fe-2O-2S] cluster. Cys-405 carries the post-translational modification Cysteine persulfide.

Belongs to the HCP family. [2Fe-2S] cluster serves as cofactor. Hybrid [4Fe-2O-2S] cluster is required as a cofactor.

The protein resides in the cytoplasm. It catalyses the reaction A + NH4(+) + H2O = hydroxylamine + AH2 + H(+). Functionally, catalyzes the reduction of hydroxylamine to form NH(3) and H(2)O. This Aeromonas salmonicida (strain A449) protein is Hydroxylamine reductase.